The chain runs to 146 residues: Large ribosomal subunit protein bL19 (146 aa).

The interval 116–146 (ADRKRIDQDRAAERAAKEEAQKAQEPKASQE) is disordered. Basic and acidic residues predominate over residues 119–146 (KRIDQDRAAERAAKEEAQKAQEPKASQE).

Part of the 50S risobomal subunit. Contacts protein L14. Forms a bridge to the 30S subunit in the 70S ribosome, contacting the 16S rRNA.

In terms of biological role, contacts the 16S rRNA of the 30S subunit (part of bridge B6), connecting the 2 subunits. In Thermus thermophilus (strain ATCC 27634 / DSM 579 / HB8), this protein is Large ribosomal subunit protein bL19 (rplS).